A 327-amino-acid chain; its full sequence is MTHSLRVIFAGTPEFAAAALAAIHEAGFPVPLVLTQPDRPAGRGMKLQASAVKRYALERGMAVAQPPSLRRAGKYPAEAVAALDLLHATPHDVMVVAAYGLLLPQEVLELPRHGCINIHASLLPRWRGAAPIHRAIEAGDAETGVTLMQMDAGLDTGAMLHEARVAIAPDDTTATLHDKLAAAGARLVVDALVELERTGALAATPQPADGVTYAEKIGKHEAALDWRKPAAALARQVRAFDPFPGGAGTLDGATLKLWAADAVPGRDDAAPGTIVDIGPDGVVIACGEGALRVTQLQKPGGKRLPAREFLAGAPLAVGQRFAPADAA.

121-124 is a binding site for (6S)-5,6,7,8-tetrahydrofolate; that stretch reads SLLP.

Belongs to the Fmt family.

It catalyses the reaction L-methionyl-tRNA(fMet) + (6R)-10-formyltetrahydrofolate = N-formyl-L-methionyl-tRNA(fMet) + (6S)-5,6,7,8-tetrahydrofolate + H(+). Its function is as follows. Attaches a formyl group to the free amino group of methionyl-tRNA(fMet). The formyl group appears to play a dual role in the initiator identity of N-formylmethionyl-tRNA by promoting its recognition by IF2 and preventing the misappropriation of this tRNA by the elongation apparatus. In Burkholderia pseudomallei (strain 668), this protein is Methionyl-tRNA formyltransferase.